We begin with the raw amino-acid sequence, 472 residues long: NADH-quinone oxidoreductase subunit N 2 (472 aa).

Transmembrane regions (helical) follow at residues 3 to 23, 34 to 54, 67 to 87, 106 to 126, 156 to 176, 198 to 218, 233 to 253, 263 to 283, 291 to 311, 317 to 337, 360 to 380, 398 to 418, and 441 to 461; these read WMSFAPELITLTSALWFLLLS, HVAALVLSALGLAACLASVGA, LFSQVFKVLLAAGLFLIVTLC, FVCTLAMMLLVGANHFLVVFI, FLVGIFASGVMIFGLALLYGA, VVIGLLLTLSGFFFKLAVFPF, VSAYIATASKVAAIGVLVRVI, LVHVLAVLSVVSMTVGNLAAI, LLAYSTVAHAGYVLIGVLSMN, AAVFYAFALLVMKFTAFLVLV, ILALALMVSLFSLAGIPPTVG, TLVLIAMINVVISLYYYLLVI, and LLSGVLVIAMVAAGFFPNQII.

This sequence belongs to the complex I subunit 2 family. NDH-1 is composed of 14 different subunits. Subunits NuoA, H, J, K, L, M, N constitute the membrane sector of the complex.

The protein localises to the cell inner membrane. It carries out the reaction a quinone + NADH + 5 H(+)(in) = a quinol + NAD(+) + 4 H(+)(out). In terms of biological role, NDH-1 shuttles electrons from NADH, via FMN and iron-sulfur (Fe-S) centers, to quinones in the respiratory chain. The immediate electron acceptor for the enzyme in this species is believed to be ubiquinone. Couples the redox reaction to proton translocation (for every two electrons transferred, four hydrogen ions are translocated across the cytoplasmic membrane), and thus conserves the redox energy in a proton gradient. This is NADH-quinone oxidoreductase subunit N 2 from Syntrophobacter fumaroxidans (strain DSM 10017 / MPOB).